A 296-amino-acid polypeptide reads, in one-letter code: Methylsterol monooxygenase 1 (296 aa).

The next 2 membrane-spanning stretches (helical) occupy residues 55–75 (LLVH…FQFI) and 100–120 (TLIF…YYFT). Residues 145 to 274 (CAVIEDAWHY…FTWWDRIFGT (130 aa)) form the Fatty acid hydroxylase domain. The short motif at 157-161 (HRLLH) is the Histidine box-1 element. Positions 170 to 174 (HKVHH) match the Histidine box-2 motif. The chain crosses the membrane as a helical span at residues 199 to 219 (FFIGIVVFCNHVVLLWAWVIC). The short motif at 249 to 255 (FHDFHHM) is the Histidine box-3 element.

The protein belongs to the sterol desaturase family. Requires Fe cation as cofactor.

The protein localises to the endoplasmic reticulum membrane. The enzyme catalyses 4,4-dimethyl-5alpha-cholest-7-en-3beta-ol + 6 Fe(II)-[cytochrome b5] + 3 O2 + 5 H(+) = 4alpha-carboxy-4beta-methyl-5alpha-cholest-7-ene-3beta-ol + 6 Fe(III)-[cytochrome b5] + 4 H2O. The protein operates within steroid biosynthesis; zymosterol biosynthesis; zymosterol from lanosterol: step 3/6. In terms of biological role, catalyzes the first step in the removal of the two C-4 methyl groups of 4,4-dimethylzymosterol. The sequence is that of Methylsterol monooxygenase 1 (MSMO1) from Gallus gallus (Chicken).